Consider the following 516-residue polypeptide: MPNPNQAIKKENEPIQVENPTELVRDDGEVEGYQKEEGKFKLVLSILKQCIGVKDIASLRFSLPAQLLEPVGNLEYWNYVDRPDYFAVMGDSDDELERMLGVLRWWFTKDLRFVRGRVVKPYNSVLGEFFRCKWVVTDPTVREDHTLDPDSSQLPTYKTEYSETTKFPLGKSYRPKASRTTSSQSVASTMTKSSTKTSKKKSSKKNSKSESNQDSSNDRSSTAPSTAESNNEHLSSSQKSKHSIVFMAEQTSHHPAVSAFYVTCPSKGIEVYGQDQIAVGFTGTSFKVCAGDLNKGVYVRFNKRDNEEYLCTHPSASVGGILRGNLHINLLDSTVILCPKTRIKTIITYIEERWLGKPRSLVEGVCYRYDPSNDTIDSIKAVPKENILATFKGNWRNCIFYSYAGESESRMLVDLNELDLVHKRCPPLDKQFPFESRKIWFPVTHNILAKHYTQATKAKQEIEDQQRQASAAREESHTEWKPRFFVPDEKEGRPTLTEEGKKVLEQSLSDEYIHGS.

2 disordered regions span residues 168–240 (PLGK…SQKS) and 459–501 (KQEI…EEGK). Residues 178-187 (SRTTSSQSVA) are compositionally biased toward polar residues. At S182 the chain carries Phosphoserine. Basic residues predominate over residues 197–206 (TSKKKSSKKN). Over residues 218-238 (DRSSTAPSTAESNNEHLSSSQ) the composition is skewed to polar residues.

The protein belongs to the OSBP family.

The protein localises to the endoplasmic reticulum. The protein is Oxysterol-binding protein-like protein 1 (obp1) of Schizosaccharomyces pombe (strain 972 / ATCC 24843) (Fission yeast).